Reading from the N-terminus, the 118-residue chain is Small ribosomal subunit protein uS13 (118 aa).

The interval 94–118 is disordered; the sequence is SLPLRGQRTKTNARTRKGPRKAIKK.

Belongs to the universal ribosomal protein uS13 family. In terms of assembly, part of the 30S ribosomal subunit. Forms a loose heterodimer with protein S19. Forms two bridges to the 50S subunit in the 70S ribosome.

Located at the top of the head of the 30S subunit, it contacts several helices of the 16S rRNA. In the 70S ribosome it contacts the 23S rRNA (bridge B1a) and protein L5 of the 50S subunit (bridge B1b), connecting the 2 subunits; these bridges are implicated in subunit movement. Contacts the tRNAs in the A and P-sites. The protein is Small ribosomal subunit protein uS13 of Pseudoalteromonas atlantica (strain T6c / ATCC BAA-1087).